The sequence spans 176 residues: NAD(P)H-quinone oxidoreductase subunit 6, chloroplastic (176 aa).

A run of 5 helical transmembrane segments spans residues 10–30, 32–52, 61–81, 107–127, and 152–172; these read ILLV…VLLT, PIYS…FHIP, AQLL…VMFM, ILFS…IWTT, and FYLP…GAIA.

This sequence belongs to the complex I subunit 6 family. As to quaternary structure, NDH is composed of at least 16 different subunits, 5 of which are encoded in the nucleus.

It is found in the plastid. The protein localises to the chloroplast thylakoid membrane. It catalyses the reaction a plastoquinone + NADH + (n+1) H(+)(in) = a plastoquinol + NAD(+) + n H(+)(out). The catalysed reaction is a plastoquinone + NADPH + (n+1) H(+)(in) = a plastoquinol + NADP(+) + n H(+)(out). Functionally, NDH shuttles electrons from NAD(P)H:plastoquinone, via FMN and iron-sulfur (Fe-S) centers, to quinones in the photosynthetic chain and possibly in a chloroplast respiratory chain. The immediate electron acceptor for the enzyme in this species is believed to be plastoquinone. Couples the redox reaction to proton translocation, and thus conserves the redox energy in a proton gradient. The protein is NAD(P)H-quinone oxidoreductase subunit 6, chloroplastic (ndhG) of Calycanthus floridus var. glaucus (Eastern sweetshrub).